Here is a 204-residue protein sequence, read N- to C-terminus: LexA repressor (204 aa).

The H-T-H motif DNA-binding region spans 27–47 (VREIGEAVGLASSSTVHGHLA). Residues Ser-126 and Lys-164 each act as for autocatalytic cleavage activity in the active site.

Belongs to the peptidase S24 family. Homodimer.

The catalysed reaction is Hydrolysis of Ala-|-Gly bond in repressor LexA.. In terms of biological role, represses a number of genes involved in the response to DNA damage (SOS response), including recA and lexA. In the presence of single-stranded DNA, RecA interacts with LexA causing an autocatalytic cleavage which disrupts the DNA-binding part of LexA, leading to derepression of the SOS regulon and eventually DNA repair. The protein is LexA repressor of Listeria innocua serovar 6a (strain ATCC BAA-680 / CLIP 11262).